The sequence spans 357 residues: MTATLAAPSKTRRVVFPFTAIVGQDEMKLALLLNVIDPKIGGVMIMGDRGTGKSTTIRALADLLPEIEVVANDPFNSSPSDPEMMSEEVRIRVDSQEPLSIVKKKVTMVDLPLGATEDRVCGTIDIEKALSEGVKAFEPGLLAKANRGILYVDEVNLLDDHLVDVLLDSAAGGWNTVEREGISIRHPARFVLVGSGNPEEGELRPQLLDRFGMHAEIRTVREPELRVKIVEQRTEFDQNPHPFCDQYQTEQEALQAKIVNAQNLLPQVTIDYDYRVKVSEVCAELDVDGLRGDIVTNRAAKALAAFEGRTEVTVDDISRVIVLCLRHRLRKDPLESIDSGSKVEKVFKRVFGVVDEA.

Position 47–54 (47–54 (GDRGTGKS)) interacts with ATP.

Belongs to the Mg-chelatase subunits D/I family.

The enzyme catalyses protoporphyrin IX + Mg(2+) + ATP + H2O = Mg-protoporphyrin IX + ADP + phosphate + 3 H(+). The protein operates within porphyrin-containing compound metabolism; chlorophyll biosynthesis. In terms of biological role, involved in chlorophyll biosynthesis; introduces a magnesium ion into protoporphyrin IX to yield Mg-protoporphyrin IX. The protein is Magnesium-chelatase subunit ChlI (chlI) of Synechocystis sp. (strain ATCC 27184 / PCC 6803 / Kazusa).